Reading from the N-terminus, the 90-residue chain is RING finger protein Z (90 aa).

Gly2 is lipidated: N-myristoyl glycine; by host. The segment at Cys32–Cys68 adopts an RING-type; atypical zinc-finger fold. The short motif at Pro85–Tyr88 is the PPXY motif element.

It belongs to the arenaviridae Z protein family. In terms of assembly, interacts with protein NP; this interaction probably directs the encapsidated genome to budding sites. Interacts (via RING-type zinc finger) with polymerase L; this interaction inhibits viral transcription and replication, Z partially blocks the product exit tunnel for the releasing nascent RNA product. Interacts with the glycoprotein complex; this interaction plays a role in virion budding. Interacts (via RING-type zinc finger) with host EIF4E; this interaction results in conformational changes of both interacting proteins and reduces EIF4E affinity for its substrate, the 5'-m7 G cap structure. Interacts (via late-budding domain) with host TSG101; this interaction is essential for budding and release of viral particles. Interacts with host RPLP0; this interaction may serve to load ribosome-like particles inside the virion. Interacts with host PML; this interaction induces PML bodies redistribution in the cytoplasm upon viral infection. Myristoylation is required for the role of RING finger protein Z in assembly and budding.

It localises to the virion. Its subcellular location is the host cytoplasm. It is found in the host perinuclear region. The protein localises to the host cell membrane. Functionally, plays a crucial role in virion assembly and budding. Expressed late in the virus life cycle, it acts as an inhibitor of viral transcription and RNA synthesis by interacting with the viral polymerase L. Presumably recruits the NP encapsidated genome to cellular membranes at budding sites via direct interaction with NP. Plays critical roles in the final steps of viral release by interacting with host TSG101, a member of the vacuolar protein-sorting pathway and using other cellular host proteins involved in vesicle formation pathway. The budding of the virus progeny occurs after association of protein Z with the viral glycoprotein complex SSP-GP1-GP2 at the cell periphery, step that requires myristoylation of protein Z. Also selectively represses protein production by associating with host EIF4E. In cell-based minigenome assay, has an inhibitory effect on the ribonucleoprotein machinery (vRNP), which is responsible for the replication and transcription of the viral genome. This is RING finger protein Z from Homo sapiens (Human).